The primary structure comprises 297 residues: Light-independent protochlorophyllide reductase iron-sulfur ATP-binding protein (297 aa).

ATP contacts are provided by residues Gly-41 to Thr-46 and Lys-70. Ser-45 is a Mg(2+) binding site. Residues Cys-126 and Cys-160 each contribute to the [4Fe-4S] cluster site. Residues Asn-211–Arg-212 and Pro-235–Leu-237 each bind ATP.

The protein belongs to the NifH/BchL/ChlL family. In terms of assembly, homodimer. Protochlorophyllide reductase is composed of three subunits; BchL, BchN and BchB. It depends on [4Fe-4S] cluster as a cofactor.

The enzyme catalyses chlorophyllide a + oxidized 2[4Fe-4S]-[ferredoxin] + 2 ADP + 2 phosphate = protochlorophyllide a + reduced 2[4Fe-4S]-[ferredoxin] + 2 ATP + 2 H2O. It participates in porphyrin-containing compound metabolism; bacteriochlorophyll biosynthesis (light-independent). Its function is as follows. Component of the dark-operative protochlorophyllide reductase (DPOR) that uses Mg-ATP and reduced ferredoxin to reduce ring D of protochlorophyllide (Pchlide) to form chlorophyllide a (Chlide). This reaction is light-independent. The L component serves as a unique electron donor to the NB-component of the complex, and binds Mg-ATP. This Cereibacter sphaeroides (strain KD131 / KCTC 12085) (Rhodobacter sphaeroides) protein is Light-independent protochlorophyllide reductase iron-sulfur ATP-binding protein.